The sequence spans 80 residues: Large ribosomal subunit protein bL31B (80 aa).

The protein belongs to the bacterial ribosomal protein bL31 family. Type B subfamily. Part of the 50S ribosomal subunit.

This chain is Large ribosomal subunit protein bL31B, found in Methylobacillus flagellatus (strain ATCC 51484 / DSM 6875 / VKM B-1610 / KT).